The primary structure comprises 84 residues: uncharacterized protein (84 aa).

A helical transmembrane segment spans residues Ala-10–His-32.

Its subcellular location is the membrane. This is an uncharacterized protein from Saccharomyces cerevisiae (strain ATCC 204508 / S288c) (Baker's yeast).